Reading from the N-terminus, the 540-residue chain is Chaperonin GroEL (540 aa).

ATP contacts are provided by residues 30–33 (TLGP), Lys51, 87–91 (DGTTT), Gly415, 479–481 (NAA), and Asp495.

The protein belongs to the chaperonin (HSP60) family. In terms of assembly, forms a cylinder of 14 subunits composed of two heptameric rings stacked back-to-back. Interacts with the co-chaperonin GroES.

It is found in the cytoplasm. The catalysed reaction is ATP + H2O + a folded polypeptide = ADP + phosphate + an unfolded polypeptide.. Together with its co-chaperonin GroES, plays an essential role in assisting protein folding. The GroEL-GroES system forms a nano-cage that allows encapsulation of the non-native substrate proteins and provides a physical environment optimized to promote and accelerate protein folding. This Raoultella planticola (Klebsiella planticola) protein is Chaperonin GroEL.